We begin with the raw amino-acid sequence, 127 residues long: MADLAKIVEDLSSLTVLEAAELSKLLEEKWGVSAAAPVAVAAVAGGAGGAAAPAEEEKTEFDVILTDAGANKINVIKEVRAITGLGLKEAKDLVEGAPKAVKEGVSKAEAADIKKKLEDAGAKADVK.

This sequence belongs to the bacterial ribosomal protein bL12 family. As to quaternary structure, homodimer. Part of the ribosomal stalk of the 50S ribosomal subunit. Forms a multimeric L10(L12)X complex, where L10 forms an elongated spine to which 2 to 4 L12 dimers bind in a sequential fashion. Binds GTP-bound translation factors.

Its function is as follows. Forms part of the ribosomal stalk which helps the ribosome interact with GTP-bound translation factors. Is thus essential for accurate translation. This chain is Large ribosomal subunit protein bL12, found in Rhizobium etli (strain CIAT 652).